Consider the following 610-residue polypeptide: Tyrosine-protein kinase Drl (610 aa).

Positions 1-20 (MAPNLLTIGLLLTLIASGQA) are cleaved as a signal peptide. At 21 to 242 (HLNIFLNLHE…RENLVPPASG (222 aa)) the chain is on the extracellular side. Positions 24 to 155 (IFLNLHEVLR…NLIFKRKKIC (132 aa)) constitute a WIF domain. Residues N63, N99, and N143 are each glycosylated (N-linked (GlcNAc...) asparagine). The disordered stretch occupies residues 202 to 230 (QAPEKQRPVVTESPVGRGNSGGSKRDFDP). A helical membrane pass occupies residues 243–263 (LVTLIVGGILALVLVSTLILI). Over 264–610 (AYCAKGPSKR…EFHTQITRYV (347 aa)) the chain is Cytoplasmic. The Protein kinase domain occupies 343 to 606 (VRLSCLVQEG…ICLSEFHTQI (264 aa)). ATP-binding positions include 349-357 (VQEGNFGRI) and K371. D468 acts as the Proton acceptor in catalysis. The residue at position 498 (Y498) is a Phosphotyrosine; by autocatalysis.

It belongs to the protein kinase superfamily. Tyr protein kinase family. In terms of tissue distribution, in the embryonic abdominal hemisegment, expression is restricted to cell body, axon and growth cone of a cluster of 20 ventral nerve cord interneurons. During muscle growth and attachment events in the embryonic abdominal hemisegment, expression is in somatic muscle fibers 21-23 at 10-13 hours and 2 patches of approximately 15 neighboring epidermal cells (dorsal and ventral attachment sites) at 6-13 hours.

It localises to the cell membrane. It carries out the reaction L-tyrosyl-[protein] + ATP = O-phospho-L-tyrosyl-[protein] + ADP + H(+). Its function is as follows. Probable coreceptor of Wnt proteins. Involved in neuronal pathway recognition and ventral muscle attachment site selection. Non-vital for development. May be part of a signal transduction cascade involved in learning and possibly memory. This Drosophila melanogaster (Fruit fly) protein is Tyrosine-protein kinase Drl (drl).